Here is a 672-residue protein sequence, read N- to C-terminus: ATP-dependent zinc metalloprotease FtsH 1 (672 aa).

The segment at 1 to 22 (MKKDSESNSSDKSNKEELSTGR) is disordered. Topologically, residues 1–23 (MKKDSESNSSDKSNKEELSTGRR) are cytoplasmic. Residues 24–44 (GGNPMIIALVITVLAAMLFFN) traverse the membrane as a helical segment. Topologically, residues 45–141 (QPEPSSLISA…KFSPPDNTAA (97 aa)) are periplasmic. A helical membrane pass occupies residues 142–162 (ILNLLILVGLPLAIFFFIFMM). The Cytoplasmic segment spans residues 163–672 (IRRTRNDMMG…TSNASARRED (510 aa)). Position 237-244 (237-244 (GPPGTGKT)) interacts with ATP. His458 contributes to the Zn(2+) binding site. Residue Glu459 is part of the active site. Residues His462 and Asp534 each contribute to the Zn(2+) site. Residues 642 to 672 (RLGDEEGKVEQIMAPEGAAERTSNASARRED) are disordered. Over residues 662 to 672 (RTSNASARRED) the composition is skewed to polar residues.

The protein in the central section; belongs to the AAA ATPase family. It in the C-terminal section; belongs to the peptidase M41 family. In terms of assembly, homohexamer. Requires Zn(2+) as cofactor.

It is found in the cell inner membrane. Functionally, acts as a processive, ATP-dependent zinc metallopeptidase for both cytoplasmic and membrane proteins. Plays a role in the quality control of integral membrane proteins. The sequence is that of ATP-dependent zinc metalloprotease FtsH 1 from Rhodopirellula baltica (strain DSM 10527 / NCIMB 13988 / SH1).